The sequence spans 344 residues: Gas vesicle ATPase GvpN2 (344 aa).

Residues 1–55 form a disordered region; sequence MTDTSRNRKVRGSKIRSSRSDKRQSRGSEDKELKRLADARDTDSEQAGDRVGDAF. Residues 7–17 are compositionally biased toward basic residues; sequence NRKVRGSKIRS. Residues 18–52 show a composition bias toward basic and acidic residues; that stretch reads SRSDKRQSRGSEDKELKRLADARDTDSEQAGDRVG. 89–96 lines the ATP pocket; that stretch reads GPTGCGKT.

This sequence belongs to the CbbQ/NirQ/NorQ/GpvN family. As to quaternary structure, forms homodimers, a GvpN-GvpO heterodimer, interacts with GvpC and GvpL, might interact with GvpA.

The protein resides in the gas vesicle. It localises to the cytoplasm. It catalyses the reaction ATP + H2O = ADP + phosphate + H(+). An ATPase that functions in gas vesicle formation. A minor component of the gas vesicle, also found in soluble extracts. Gas vesicles are hollow, gas filled proteinaceous nanostructures found in several microbial planktonic microorganisms. They allow positioning of halobacteria at the optimal depth for growth in the poorly aerated, shallow brine pools of their habitat. Functionally, expression of 2 c-vac DNA fragments containing 2 divergently transcribed regions (gvpE-gvpF-gvpG-gvpH-gvpI-gvpJ-gvpK-gvpL-gvpM and gvpA-gvpC-gvpN-gvpO) allows H.volcanii to produce gas vesicles. The sequence is that of Gas vesicle ATPase GvpN2 from Halobacterium salinarum (strain ATCC 700922 / JCM 11081 / NRC-1) (Halobacterium halobium).